We begin with the raw amino-acid sequence, 150 residues long: MSSKKIVLTSSDDECFEIDEAVARKMQMVAHMIDDDCADKAIRLQNVTGKILAIIIEYCKKHVDDVEAKNEFVTWDAEFVKNIDMDTLFKLLDAADYLIVIGLKNLIAQAIADYTADKTVNEIRELFNIENDYTPEEEEELRKKNEWAFN.

Residues 92–150 (LDAADYLIVIGLKNLIAQAIADYTADKTVNEIRELFNIENDYTPEEEEELRKKNEWAFN) form an interaction with the F-box domain of F-box proteins region.

Belongs to the SKP1 family. Part of a SCF (SKP1-cullin-F-box) protein ligase complex. Interacts with CPR1/CPR30. Mainly detected in the siliques.

The protein localises to the nucleus. Its pathway is protein modification; protein ubiquitination. Involved in ubiquitination and subsequent proteasomal degradation of target proteins. Together with CUL1, RBX1 and a F-box protein, it forms a SCF E3 ubiquitin ligase complex. The functional specificity of this complex depends on the type of F-box protein. In the SCF complex, it serves as an adapter that links the F-box protein to CUL1. Probably implicated in incompatibility response after hybridization. The protein is SKP1-like protein 17 (ASK17) of Arabidopsis thaliana (Mouse-ear cress).